A 201-amino-acid chain; its full sequence is Protein MJ0810 (201 aa).

In terms of domain architecture, AMMECR1 spans 7-197 (EEGTFAVRYA…EVEPRGEVIE (191 aa)).

In Methanocaldococcus jannaschii (strain ATCC 43067 / DSM 2661 / JAL-1 / JCM 10045 / NBRC 100440) (Methanococcus jannaschii), this protein is Protein MJ0810.